Consider the following 964-residue polypeptide: Glycine dehydrogenase (decarboxylating) (964 aa).

Over residues 1 to 11 (MNSTLQNQTKT) the composition is skewed to polar residues. The interval 1-21 (MNSTLQNQTKTNLEKVGTDPL) is disordered. K713 carries the post-translational modification N6-(pyridoxal phosphate)lysine.

This sequence belongs to the GcvP family. The glycine cleavage system is composed of four proteins: P, T, L and H. Requires pyridoxal 5'-phosphate as cofactor.

It catalyses the reaction N(6)-[(R)-lipoyl]-L-lysyl-[glycine-cleavage complex H protein] + glycine + H(+) = N(6)-[(R)-S(8)-aminomethyldihydrolipoyl]-L-lysyl-[glycine-cleavage complex H protein] + CO2. The glycine cleavage system catalyzes the degradation of glycine. The P protein binds the alpha-amino group of glycine through its pyridoxal phosphate cofactor; CO(2) is released and the remaining methylamine moiety is then transferred to the lipoamide cofactor of the H protein. In Leptospira interrogans serogroup Icterohaemorrhagiae serovar Lai (strain 56601), this protein is Glycine dehydrogenase (decarboxylating).